The chain runs to 268 residues: MSDPRPARAVVVGIDGSRAATHAALWAVDEAVNRDIPLRLVYVIDPSQLSAAGEGGGQSAARAALHDASRKVEATGQPVKIETEVLCGRPLTKLMQESRSAAMLCVGSVGLDHVRGRRGSVAATLAGSALCPVAVIHPSPAEPATTSQVSAVVAEVDNGVVLRHAFEEARLRGVPLRAVAVHAAETPDDVEQGSRLAHVHLSRRLAHWTRLYPEVRVDRAIAGGSACRHLAANAKPGQLFVADSHSAHELCGAYQPGCAVLTVRSANL.

ATP contacts are provided by residues Gly-13, 107–113 (GSVGLDH), Arg-117, and 120–121 (SV).

Belongs to the universal stress protein A family.

In Mycobacterium tuberculosis (strain CDC 1551 / Oshkosh), this protein is Universal stress protein MT3220.